The sequence spans 420 residues: MNVTPWEVEGVIDYSKLIEEFGMQPFSEVLPEIDNPHILMRRGAIFGHRDYWRIIEAMQKKEPWAVMSGFMPSGLPHFGHKMTMDEIVWHQSAGGKAFVAIADMEAHSVRGLSWEKTRELGMLYIKSIIALGLREDAVIYFQSKSSHVKDLAFELSAEVNFSELRAIYGFNSDTSLAKMFVTAIQAADILHPQLSDFGGPKPVVVPVGADQDPHMRLTRDLAARISIFSFEPVEGGVRVRSRKGAEYLSSLRDLEFDKKIYEEHMDIFGEAEEIERAVRKIEVEIGGFAFIPPSSTYHRFTTGLTGGKMSSSKPESYISLLDPPEEGAKKVMKAFTGGRATAEEQRRLGGEPDRCVVFELYSFHLIDSDEELNQIEAECREGRLLCGKCKKMAAELVKSFLKEHQEKMEAVDLSNYTIIG.

The 'HIGH' region signature appears at 72-80 (PSGLPHFGH). Residues 308 to 312 (KMSSS) carry the 'KMSKS' region motif.

The protein belongs to the class-I aminoacyl-tRNA synthetase family.

Its subcellular location is the cytoplasm. It carries out the reaction tRNA(Trp) + L-tryptophan + ATP = L-tryptophyl-tRNA(Trp) + AMP + diphosphate + H(+). The sequence is that of Tryptophan--tRNA ligase from Archaeoglobus fulgidus (strain ATCC 49558 / DSM 4304 / JCM 9628 / NBRC 100126 / VC-16).